The chain runs to 433 residues: Histidinol dehydrogenase (433 aa).

NAD(+) contacts are provided by Tyr-130, Gln-191, and Asn-214. Substrate is bound by residues Ser-237, Gln-259, and His-262. Residues Gln-259 and His-262 each contribute to the Zn(2+) site. Catalysis depends on proton acceptor residues Glu-327 and His-328. Substrate is bound by residues His-328, Asp-361, Glu-415, and His-420. Zn(2+) is bound at residue Asp-361. His-420 lines the Zn(2+) pocket.

The protein belongs to the histidinol dehydrogenase family. The cofactor is Zn(2+).

The enzyme catalyses L-histidinol + 2 NAD(+) + H2O = L-histidine + 2 NADH + 3 H(+). It participates in amino-acid biosynthesis; L-histidine biosynthesis; L-histidine from 5-phospho-alpha-D-ribose 1-diphosphate: step 9/9. Functionally, catalyzes the sequential NAD-dependent oxidations of L-histidinol to L-histidinaldehyde and then to L-histidine. In Ruegeria pomeroyi (strain ATCC 700808 / DSM 15171 / DSS-3) (Silicibacter pomeroyi), this protein is Histidinol dehydrogenase.